A 448-amino-acid chain; its full sequence is Beta-glucosidase B (448 aa).

Residue Glu167 is the Proton donor of the active site. Glu356 (nucleophile) is an active-site residue.

The protein belongs to the glycosyl hydrolase 1 family.

It carries out the reaction Hydrolysis of terminal, non-reducing beta-D-glucosyl residues with release of beta-D-glucose.. The polypeptide is Beta-glucosidase B (bglB) (Paenibacillus polymyxa (Bacillus polymyxa)).